We begin with the raw amino-acid sequence, 216 residues long: Somatotropin (216 aa).

The first 25 residues, 1 to 25, serve as a signal peptide directing secretion; it reads MAPGSWFSPLFITVITLGLQWPQEA. His-46 contributes to the Zn(2+) binding site. Cys-78 and Cys-189 are oxidised to a cystine. Glu-198 provides a ligand contact to Zn(2+). A disulfide bridge links Cys-206 with Cys-214.

This sequence belongs to the somatotropin/prolactin family.

The protein resides in the secreted. Growth hormone plays an important role in growth control. The sequence is that of Somatotropin (GH) from Anas platyrhynchos (Mallard).